The following is a 164-amino-acid chain: Ubiquitin-fold modifier-conjugating enzyme 1 (164 aa).

Cys116 (glycyl thioester intermediate) is an active-site residue.

The protein belongs to the ubiquitin-conjugating enzyme family. UFC1 subfamily.

In terms of biological role, E2-like enzyme which forms an intermediate with UFM1 via a thioester linkage. The protein is Ubiquitin-fold modifier-conjugating enzyme 1 of Drosophila sechellia (Fruit fly).